The primary structure comprises 111 residues: Capsid assembly protein Gp31 (111 aa).

As to quaternary structure, homoheptamer. Forms a stable complex with groEL in the presence of ATP.

Essential for proper capsid assembly. In absence of Gp31 the major capsid protein (Gp23) assembles into 'lumps'. Acts as a co-chaperonin with the host groEL protein. The protein is Capsid assembly protein Gp31 (31) of Escherichia coli (Bacteriophage T4).